The chain runs to 107 residues: Putative nucleosome assembly protein 1-like 6 (107 aa).

The protein belongs to the nucleosome assembly protein (NAP) family.

The chain is Putative nucleosome assembly protein 1-like 6 from Homo sapiens (Human).